A 233-amino-acid chain; its full sequence is Cobalt-containing nitrile hydratase subunit beta (233 aa).

Belongs to the nitrile hydratase subunit beta family. Heterotetramer of two alpha and two beta chains.

The enzyme catalyses an aliphatic primary amide = an aliphatic nitrile + H2O. NHase catalyzes the hydration of various nitrile compounds to the corresponding amides. This is Cobalt-containing nitrile hydratase subunit beta from Pseudonocardia thermophila.